The chain runs to 503 residues: Probable cytosol aminopeptidase (503 aa).

Residues K270 and D275 each coordinate Mn(2+). K282 is an active-site residue. Positions 293, 352, and 354 each coordinate Mn(2+). R356 is an active-site residue.

This sequence belongs to the peptidase M17 family. It depends on Mn(2+) as a cofactor.

Its subcellular location is the cytoplasm. It carries out the reaction Release of an N-terminal amino acid, Xaa-|-Yaa-, in which Xaa is preferably Leu, but may be other amino acids including Pro although not Arg or Lys, and Yaa may be Pro. Amino acid amides and methyl esters are also readily hydrolyzed, but rates on arylamides are exceedingly low.. The catalysed reaction is Release of an N-terminal amino acid, preferentially leucine, but not glutamic or aspartic acids.. Functionally, presumably involved in the processing and regular turnover of intracellular proteins. Catalyzes the removal of unsubstituted N-terminal amino acids from various peptides. The sequence is that of Probable cytosol aminopeptidase from Shigella boydii serotype 18 (strain CDC 3083-94 / BS512).